The following is a 156-amino-acid chain: Phosphopantetheine adenylyltransferase (156 aa).

Position 10 (Thr10) interacts with substrate. Residues 10–11 (TF) and His18 each bind ATP. Substrate contacts are provided by Lys42, Leu74, and Arg88. Residues 89–91 (GIR), Glu99, and 124–130 (WAFISSS) each bind ATP.

Belongs to the bacterial CoaD family. Homohexamer. It depends on Mg(2+) as a cofactor.

Its subcellular location is the cytoplasm. It catalyses the reaction (R)-4'-phosphopantetheine + ATP + H(+) = 3'-dephospho-CoA + diphosphate. The protein operates within cofactor biosynthesis; coenzyme A biosynthesis; CoA from (R)-pantothenate: step 4/5. Its function is as follows. Reversibly transfers an adenylyl group from ATP to 4'-phosphopantetheine, yielding dephospho-CoA (dPCoA) and pyrophosphate. This Hamiltonella defensa subsp. Acyrthosiphon pisum (strain 5AT) protein is Phosphopantetheine adenylyltransferase.